A 578-amino-acid polypeptide reads, in one-letter code: Putative diflavin flavoprotein A 2 (578 aa).

Residues 48–240 are zinc metallo-hydrolase; the sequence is RHGTTYNSFL…LQVVLVATGH (193 aa). His97, Glu99, Asp101, His164, Asp183, and His240 together coordinate Fe cation. Positions 269–406 constitute a Flavodoxin-like domain; that stretch reads VALFYVDGYG…LCREAGTDLG (138 aa). Positions 429-578 are flavodoxin-reductase-like; the sequence is IGRLSTGLYI…THHRKLGNHY (150 aa).

It in the N-terminal section; belongs to the zinc metallo-hydrolase group 3 family. The protein in the C-terminal section; belongs to the flavodoxin reductase family. Fe cation serves as cofactor.

In terms of biological role, mediates electron transfer from NADH to oxygen, reducing it to water. This modular protein has 3 redox cofactors, in other organisms the same activity requires 2 or 3 proteins. In Synechocystis sp. (strain ATCC 27184 / PCC 6803 / Kazusa), this protein is Putative diflavin flavoprotein A 2 (dfa2).